We begin with the raw amino-acid sequence, 257 residues long: Pimeloyl-[acyl-carrier protein] methyl ester esterase (257 aa).

Residues 16–240 (LVLIHGWGMN…EQASHAPFIS (225 aa)) enclose the AB hydrolase-1 domain. Substrate is bound by residues Trp22, 82–83 (SL), and 143–147 (FMALQ). Ser82 acts as the Nucleophile in catalysis. Residues Asp207 and His235 contribute to the active site. A substrate-binding site is contributed by His235.

This sequence belongs to the AB hydrolase superfamily. Carboxylesterase BioH family. In terms of assembly, monomer.

Its subcellular location is the cytoplasm. It carries out the reaction 6-carboxyhexanoyl-[ACP] methyl ester + H2O = 6-carboxyhexanoyl-[ACP] + methanol + H(+). It functions in the pathway cofactor biosynthesis; biotin biosynthesis. In terms of biological role, the physiological role of BioH is to remove the methyl group introduced by BioC when the pimeloyl moiety is complete. It allows to synthesize pimeloyl-ACP via the fatty acid synthetic pathway through the hydrolysis of the ester bonds of pimeloyl-ACP esters. This is Pimeloyl-[acyl-carrier protein] methyl ester esterase from Aliivibrio fischeri (strain MJ11) (Vibrio fischeri).